The following is a 77-amino-acid chain: U10-lycotoxin-Ls1d (77 aa).

Positions Met-1–Ala-20 are cleaved as a signal peptide. Residues Glu-21–Arg-26 constitute a propeptide that is removed on maturation.

This sequence belongs to the neurotoxin 19 (CSTX) family. 09 (U10-Lctx) subfamily. Post-translationally, contains 4 disulfide bonds. In terms of tissue distribution, expressed by the venom gland.

It localises to the secreted. This is U10-lycotoxin-Ls1d from Lycosa singoriensis (Wolf spider).